The following is a 302-amino-acid chain: MALLDLKQFYELREGCDDKGILVMDGDWLVFQAMSAAEFDASWEEEIWHRCCDHAKARQILEDSIKSYETRKKAWVGAPIVLAFTDSVNWRKELVDPNYKANRKATKKPVGYFEFLEALFEREEFYCIREPMLEGDDVMGVIASNPSAFGARKAVIISCDKDFKTIPNCDFLWCTTGNILTQTKETADWWHLFQTIKGDMTDGYSGIPGWGDTAEGFLNDPFIVEPVESVLKSGKNKGQTVTKWVKRAPDATETLWDCIKSIGAKAGMTEQEIIKQGQMARILRFEEYNYIDKEIYLWTPRS.

The catalysed reaction is Exonucleolytic cleavage in the 5'- to 3'-direction to yield nucleoside 5'-phosphates.. This enzyme is essential for phage DNA replication; it is believed to function in the removal of DNA-linked RNA primers. It is also necessary for host DNA degradation and phage genetic recombination. In Enterobacteria phage T3 (Bacteriophage T3), this protein is Exodeoxyribonuclease (6).